The primary structure comprises 424 residues: Riboflavin biosynthesis protein RibBA (424 aa).

Residues 1–206 (MFTCEAGIAS…VDDLITYRYT (206 aa)) form a DHBP synthase region. D-ribulose 5-phosphate-binding positions include 32 to 33 (RE), Asp37, 145 to 149 (RPGHT), and Glu169. Residue Glu33 coordinates Mg(2+). His148 is a Mg(2+) binding site. Residues 207-424 (YDSLVTKISS…YETVERMSCR (218 aa)) are GTP cyclohydrolase II. 257-261 (RVHSE) contacts GTP. Cys262, Cys273, and Cys275 together coordinate Zn(2+). Residues Gln278, 301–303 (EGR), and Thr323 contribute to the GTP site. Catalysis depends on Asp335, which acts as the Proton acceptor; for GTP cyclohydrolase activity. Arg337 functions as the Nucleophile; for GTP cyclohydrolase activity in the catalytic mechanism. Residues Thr358 and Lys363 each coordinate GTP.

In the N-terminal section; belongs to the DHBP synthase family. It in the C-terminal section; belongs to the GTP cyclohydrolase II family. It depends on Mg(2+) as a cofactor. Mn(2+) serves as cofactor. The cofactor is Zn(2+).

The catalysed reaction is D-ribulose 5-phosphate = (2S)-2-hydroxy-3-oxobutyl phosphate + formate + H(+). The enzyme catalyses GTP + 4 H2O = 2,5-diamino-6-hydroxy-4-(5-phosphoribosylamino)-pyrimidine + formate + 2 phosphate + 3 H(+). Its pathway is cofactor biosynthesis; riboflavin biosynthesis; 2-hydroxy-3-oxobutyl phosphate from D-ribulose 5-phosphate: step 1/1. It functions in the pathway cofactor biosynthesis; riboflavin biosynthesis; 5-amino-6-(D-ribitylamino)uracil from GTP: step 1/4. Its function is as follows. Catalyzes the conversion of D-ribulose 5-phosphate to formate and 3,4-dihydroxy-2-butanone 4-phosphate. Functionally, catalyzes the conversion of GTP to 2,5-diamino-6-ribosylamino-4(3H)-pyrimidinone 5'-phosphate (DARP), formate and pyrophosphate. The sequence is that of Riboflavin biosynthesis protein RibBA from Chlamydia trachomatis serovar D (strain ATCC VR-885 / DSM 19411 / UW-3/Cx).